Here is a 921-residue protein sequence, read N- to C-terminus: MVNDNKTYFQRSLRIERIPIDFKYKIWNLLLIAKAKLNTTHDGELNTTNFDELNQMIDSRINNPSYSEEIKESLNFIKDIKNQCNLLPSVNFLTPNKNYDDLIEKFKVILLNLRFKEDDIKNFNYNGQHYLNDQHIKLNRKGIEYYKNKDYGNALKCYNQIEKSPFKSLSFHLISKNSLNLAILYSKLNNGPKAIESSLKSCIYNPLNNRAYFYYGRYILESNKQKALDHLYTAFIMESKTKEKQYYEHEYFSLKDTTISGFKKVEESLKMETRQNLLNMYHFIGPSNNQISQTVEQYMDQVANQTQTEKAHNYNDWVTKINDKIKLTKQTIKMTKRKFLSIDELISNPFDINEIQFDALQSNGMNGIVKSGTIGSMKVVVKFPNSYFNGIISTATINSTGSSEWSFGSSDNGGNNSNSNGNSDSNSNNDSNNNNNNNNNNNNNNNNNNNNNNNNNNNNNNNNNNNNNNNNNNNNNNNNNNNSNNNNNSDGSSGDDNRNSDNLIKSDLIDECFLNETVSHLLINEFQINNTPSIVGIGINMIVMEKVDGTELEKYDKTKLTKKIFMDLVIYLMEMNIFEIQHRDLHAANILIKEDGSLSIIDYGYSNIGDDRKGYDISNLKSIYYDFFNNYDTINHDKKEKIKNVFNYLNLNLNSNSNLNLNLNLYSNSNPNSNPNSNPNPKSNLNLNSNSNSNPNPNLNSYSNSHSNSNSNLNSNQKILIDLLNILIEDEEILIPIHSKSYNDERQIEYIFAKRDNDKFLLNDKTFPKIPHCLEMDNKIDLSETPMLKTNIIKKSLKTILPPFIKVCDLEIKGKKELVFWVQDRGNIIIYVPISIESQKFNGCVCPYGQYFHSKLCIFTDKEEYDIPLSFRTKGNIHLDDKPIARFRPLTHVRYICFALKLCDGLKNEYIIEPFEEQFEK.

The tract at residues 334 to 628 (MTKRKFLSID…NLKSIYYDFF (295 aa)) is kinase-like. A compositionally biased stretch (low complexity) spans 401 to 494 (GSSEWSFGSS…NNNNSDGSSG (94 aa)). Disordered regions lie at residues 401–499 (GSSE…DNRN) and 664–711 (NLYS…NSNS).

This is an uncharacterized protein from Dictyostelium discoideum (Social amoeba).